We begin with the raw amino-acid sequence, 257 residues long: Ribonuclease HII (257 aa).

An RNase H type-2 domain is found at 72–257 (TYIAGIDEVG…FAPIKDMIQK (186 aa)). A divalent metal cation contacts are provided by Asp78, Glu79, and Asp170.

This sequence belongs to the RNase HII family. It depends on Mn(2+) as a cofactor. Mg(2+) is required as a cofactor.

The protein resides in the cytoplasm. The catalysed reaction is Endonucleolytic cleavage to 5'-phosphomonoester.. Its function is as follows. Endonuclease that specifically degrades the RNA of RNA-DNA hybrids. The protein is Ribonuclease HII of Bacillus cereus (strain ATCC 14579 / DSM 31 / CCUG 7414 / JCM 2152 / NBRC 15305 / NCIMB 9373 / NCTC 2599 / NRRL B-3711).